The chain runs to 1993 residues: [F-actin]-monooxygenase MICAL3 (1993 aa).

The monooxygenase domain stretch occupies residues 2-494; the sequence is EERKQETTNQ…RHLYDSGETK (493 aa). Residues cysteine 97, 116–118, 123–125, phenylalanine 183, tyrosine 298, and aspartate 398 each bind FAD; these read EKR and RNN. In terms of domain architecture, Calponin-homology (CH) spans 518–624; sequence VARSSKLLGW…YLTQFYEMFK (107 aa). Serine 649 is modified (phosphoserine). A disordered region spans residues 658–704; it reads GQTISRKRSPKDKKEKDSDGAGKRRKTSQSEEEEPPRSYKGERPTLV. Positions 669 to 679 are enriched in basic and acidic residues; it reads DKKEKDSDGAG. Phosphoserine is present on residues serine 685 and serine 687. The LIM zinc-binding domain occupies 762 to 824; it reads DTCYFCQKRV…KPHYCYRLSG (63 aa). The Zn(2+) site is built by cysteine 764, cysteine 767, histidine 785, cysteine 788, cysteine 791, cysteine 794, cysteine 814, and histidine 817. The tract at residues 854 to 886 is disordered; sequence NGLASVAASSAERSPGTSMNGLEEPSIAKRLRG. Residues 860 to 873 show a composition bias toward polar residues; it reads AASSAERSPGTSMN. Threonine 887 bears the Phosphothreonine mark. Disordered stretches follow at residues 905-1023, 1039-1309, 1332-1546, and 1559-1837; these read ELEE…RLQQ, WTHI…LSGP, IRRS…FFTP, and KENG…EELK. Positions 938 to 951 are enriched in acidic residues; sequence SEMEEEEEEDDEDD. The span at 975 to 988 shows a compositional bias: basic and acidic residues; that stretch reads GRSEEELEASKNFE. At serine 977 the chain carries Phosphoserine. The span at 989 to 1014 shows a compositional bias: acidic residues; it reads PEEEEEEEEYEEEDEEYEEEEEEESS. Residues 1039–1051 are compositionally biased toward basic and acidic residues; the sequence is WTHIREREAEERM. Residues 1065-1090 are compositionally biased toward acidic residues; sequence DEDDLEEDADSEPAETEGEAAEDGDP. Residues 1111 to 1148 show a composition bias toward basic and acidic residues; it reads EAEHRLQSQAKVKAELELRVSENEEEKPSDAPKQEERG. Residues serine 1131 and serine 1187 each carry the phosphoserine modification. Basic and acidic residues predominate over residues 1199 to 1212; that stretch reads LREKPKAEVPEEQK. Residues 1230–1239 show a composition bias toward polar residues; the sequence is SPTSPTSLQP. The segment covering 1245–1255 has biased composition (pro residues); it reads PPTPPTPPPTQ. Residues 1257-1275 are compositionally biased toward polar residues; the sequence is PICSQPQPSSDASIPSPTK. Serine 1272 is subject to Phosphoserine. Position 1274 is a phosphothreonine (threonine 1274). Phosphoserine occurs at positions 1276 and 1335. A Phosphothreonine modification is found at threonine 1339. A phosphoserine mark is found at serine 1369 and serine 1382. Residues 1405–1420 are compositionally biased toward basic and acidic residues; that stretch reads PSDKELRSSQEERRDL. The span at 1421–1433 shows a compositional bias: low complexity; sequence SSSSGLGLHDSSS. Serine 1431 is modified (phosphoserine). Residues 1434–1452 show a composition bias toward polar residues; that stretch reads NMKTLGSQSFNTSDSTMLT. A Phosphothreonine modification is found at threonine 1452. The span at 1454–1465 shows a compositional bias: pro residues; the sequence is PSSPPPPPPPNE. The span at 1516–1530 shows a compositional bias: acidic residues; it reads SVDEIPFADDVEDTY. Over residues 1584-1600 the composition is skewed to basic and acidic residues; that stretch reads EAKELAEERMRAREKSV. Over residues 1623–1633 the composition is skewed to polar residues; sequence SSRSHTAQSQG. Serine 1640 carries the phosphoserine modification. A compositionally biased stretch (low complexity) spans 1665–1685; that stretch reads SPPSDSGGPDGSVTSSEGSSG. The span at 1686-1704 shows a compositional bias: basic residues; it reads KSKKRSSLFSPRRNKKEKK. Serine 1692 and serine 1695 each carry phosphoserine. The segment covering 1754–1763 has biased composition (polar residues); it reads TPSSGATVDS. Residues 1795–1811 are compositionally biased toward basic and acidic residues; that stretch reads ILERSSQKSKREPRTYT. Positions 1817 to 1983 form a coiled coil; it reads AKLTRRVQKA…EEDKDLEAAM (167 aa). Positions 1819–1830 are enriched in basic residues; that stretch reads LTRRVQKAARRQ. One can recognise a bMERB domain in the interval 1832–1981; sequence KQEELKRLHR…EKEEDKDLEA (150 aa). Residue serine 1903 is modified to Phosphoserine.

This sequence belongs to the Mical family. As to quaternary structure, interacts with RAB1B, RAB8A, RAB10, RAB13 and RAB15 (in their GTP-bound forms); binding to RAB1B is of low affinity compared to other Rab proteins; at least in case of RAB8A can bind 2 molecules of RAB8A simultaneously through a high and a low affinity binding site, respectively. Interacts with ERC1 and RAB8A; may bridge ERC1 with RAB8A. Interacts with KIF23 and ERC1; enhances the interaction between KIF23 and ERC1. Interacts with NINL. Requires FAD as cofactor.

The protein localises to the cytoplasm. Its subcellular location is the cell cortex. It localises to the cytoskeleton. The protein resides in the nucleus. It is found in the midbody. The protein localises to the spindle. Its subcellular location is the cilium basal body. The catalysed reaction is L-methionyl-[F-actin] + NADPH + O2 + H(+) = L-methionyl-(R)-S-oxide-[F-actin] + NADP(+) + H2O. Monooxygenase that promotes depolymerization of F-actin by mediating oxidation of specific methionine residues on actin to form methionine-sulfoxide, resulting in actin filament disassembly and preventing repolymerization. In the absence of actin, it also functions as a NADPH oxidase producing H(2)O(2). Seems to act as Rab effector protein and play a role in vesicle trafficking. Involved in exocytic vesicles tethering and fusion: the monooxygenase activity is required for this process and implicates RAB8A associated with exocytotic vesicles. Required for cytokinesis. Contributes to stabilization and/or maturation of the intercellular bridge independently of its monooxygenase activity. Promotes recruitment of Rab8 and ERC1 to the intercellular bridge, and together these proteins are proposed to function in timely abscission. This Mus musculus (Mouse) protein is [F-actin]-monooxygenase MICAL3 (Mical3).